The following is a 201-amino-acid chain: Phosphoheptose isomerase (201 aa).

The region spanning 36–195 (IAKSLNEGGK…EDILFEIPAA (160 aa)) is the SIS domain. 51–53 (NGG) is a substrate binding site. Residues His-60 and Glu-64 each coordinate Zn(2+). Residues Glu-64, 93–94 (ND), 119–121 (STS), Ser-124, and Gln-171 each bind substrate. Zn(2+)-binding residues include Gln-171 and His-179.

Belongs to the SIS family. GmhA subfamily. Zn(2+) is required as a cofactor.

The protein localises to the cytoplasm. The catalysed reaction is 2 D-sedoheptulose 7-phosphate = D-glycero-alpha-D-manno-heptose 7-phosphate + D-glycero-beta-D-manno-heptose 7-phosphate. The protein operates within carbohydrate biosynthesis; D-glycero-D-manno-heptose 7-phosphate biosynthesis; D-glycero-alpha-D-manno-heptose 7-phosphate and D-glycero-beta-D-manno-heptose 7-phosphate from sedoheptulose 7-phosphate: step 1/1. Catalyzes the isomerization of sedoheptulose 7-phosphate in D-glycero-D-manno-heptose 7-phosphate. The sequence is that of Phosphoheptose isomerase from Thermodesulfovibrio yellowstonii (strain ATCC 51303 / DSM 11347 / YP87).